Here is a 216-residue protein sequence, read N- to C-terminus: Orotate phosphoribosyltransferase (216 aa).

5-phospho-alpha-D-ribose 1-diphosphate is bound by residues R101, K105, H107, and E127–S135. Residue S131 participates in orotate binding.

Belongs to the purine/pyrimidine phosphoribosyltransferase family. PyrE subfamily. Homodimer. The cofactor is Mg(2+).

The catalysed reaction is orotidine 5'-phosphate + diphosphate = orotate + 5-phospho-alpha-D-ribose 1-diphosphate. It participates in pyrimidine metabolism; UMP biosynthesis via de novo pathway; UMP from orotate: step 1/2. Its function is as follows. Catalyzes the transfer of a ribosyl phosphate group from 5-phosphoribose 1-diphosphate to orotate, leading to the formation of orotidine monophosphate (OMP). The protein is Orotate phosphoribosyltransferase of Cutibacterium acnes (strain DSM 16379 / KPA171202) (Propionibacterium acnes).